An 82-amino-acid chain; its full sequence is Probable glutamyl-tRNA(Gln) amidotransferase subunit C (82 aa).

The protein belongs to the GatC family. As to quaternary structure, heterotrimer of A, B and C subunits.

It carries out the reaction L-glutamyl-tRNA(Gln) + L-glutamine + ATP + H2O = L-glutaminyl-tRNA(Gln) + L-glutamate + ADP + phosphate + H(+). The catalysed reaction is L-aspartyl-tRNA(Asn) + L-glutamine + ATP + H2O = L-asparaginyl-tRNA(Asn) + L-glutamate + ADP + phosphate + 2 H(+). Functionally, allows the formation of correctly charged Asn-tRNA(Asn) or Gln-tRNA(Gln) through the transamidation of misacylated Asp-tRNA(Asn) or Glu-tRNA(Gln) in organisms which lack either or both of asparaginyl-tRNA or glutaminyl-tRNA synthetases. The reaction takes place in the presence of glutamine and ATP through an activated phospho-Asp-tRNA(Asn) or phospho-Glu-tRNA(Gln). This chain is Probable glutamyl-tRNA(Gln) amidotransferase subunit C, found in Methanocaldococcus jannaschii (strain ATCC 43067 / DSM 2661 / JAL-1 / JCM 10045 / NBRC 100440) (Methanococcus jannaschii).